Reading from the N-terminus, the 291-residue chain is Small ribosomal subunit protein uS2 (291 aa).

The protein belongs to the universal ribosomal protein uS2 family.

The protein is Small ribosomal subunit protein uS2 of Lawsonia intracellularis (strain PHE/MN1-00).